A 454-amino-acid polypeptide reads, in one-letter code: Cytochrome b-c1 complex subunit 2, mitochondrial (454 aa).

Residues 1 to 35 constitute a mitochondrion transit peptide; sequence MISRSALSRGSQLALRRPAAAKTAQRGFAAAAASP.

This sequence belongs to the peptidase M16 family. UQCRC2/QCR2 subfamily. In terms of assembly, component of the ubiquinol-cytochrome c oxidoreductase (cytochrome b-c1 complex, complex III, CIII), a multisubunit enzyme composed of 10 subunits. The complex is composed of 3 respiratory subunits cytochrome b (cob), cytochrome c1 (cyt-1) and Rieske protein (fes-1), 2 core protein subunits pep and ucr-1, and 5 low-molecular weight protein subunits qcr6, qcr7, qcr8, qcr9 and probably NCU16844/qcr10. The complex exists as an obligatory dimer and forms supercomplexes (SCs) in the inner mitochondrial membrane with NADH-ubiquinone oxidoreductase (complex I, CI) and cytochrome c oxidase (complex IV, CIV), resulting in different assemblies (supercomplexes SCI(1)III(2), SCIII(2)IV(1) and SCIII(2)IV(2) as well as higher order I(x)III(y)IV(z) megacomplexes).

It localises to the mitochondrion inner membrane. Its function is as follows. Component of the ubiquinol-cytochrome c oxidoreductase, a multisubunit transmembrane complex that is part of the mitochondrial electron transport chain which drives oxidative phosphorylation. The respiratory chain contains 3 multisubunit complexes succinate dehydrogenase (complex II, CII), ubiquinol-cytochrome c oxidoreductase (cytochrome b-c1 complex, complex III, CIII) and cytochrome c oxidase (complex IV, CIV), that cooperate to transfer electrons derived from NADH and succinate to molecular oxygen, creating an electrochemical gradient over the inner membrane that drives transmembrane transport and the ATP synthase. The cytochrome b-c1 complex catalyzes electron transfer from ubiquinol to cytochrome c, linking this redox reaction to translocation of protons across the mitochondrial inner membrane, with protons being carried across the membrane as hydrogens on the quinol. In the process called Q cycle, 2 protons are consumed from the matrix, 4 protons are released into the intermembrane space and 2 electrons are passed to cytochrome c. The chain is Cytochrome b-c1 complex subunit 2, mitochondrial (ucr-1) from Neurospora crassa (strain ATCC 24698 / 74-OR23-1A / CBS 708.71 / DSM 1257 / FGSC 987).